Consider the following 307-residue polypeptide: Oxygen-dependent coproporphyrinogen-III oxidase (307 aa).

Position 94 (Ser-94) interacts with substrate. Positions 98 and 108 each coordinate a divalent metal cation. Catalysis depends on His-108, which acts as the Proton donor. 110 to 112 (NVR) is a binding site for substrate. A divalent metal cation-binding residues include His-147 and His-177. Residues 242-277 (YVEFNLVWDRGTLFGLQSGGRTESILMSMPPLAQWQ) form an important for dimerization region. A substrate-binding site is contributed by 260 to 262 (GGR).

Belongs to the aerobic coproporphyrinogen-III oxidase family. As to quaternary structure, homodimer. The cofactor is a divalent metal cation.

The protein resides in the cytoplasm. The catalysed reaction is coproporphyrinogen III + O2 + 2 H(+) = protoporphyrinogen IX + 2 CO2 + 2 H2O. It functions in the pathway porphyrin-containing compound metabolism; protoporphyrin-IX biosynthesis; protoporphyrinogen-IX from coproporphyrinogen-III (O2 route): step 1/1. Its function is as follows. Involved in the heme biosynthesis. Catalyzes the aerobic oxidative decarboxylation of propionate groups of rings A and B of coproporphyrinogen-III to yield the vinyl groups in protoporphyrinogen-IX. The polypeptide is Oxygen-dependent coproporphyrinogen-III oxidase (Chromohalobacter salexigens (strain ATCC BAA-138 / DSM 3043 / CIP 106854 / NCIMB 13768 / 1H11)).